A 683-amino-acid chain; its full sequence is Leishmanolysin-like peptidase (683 aa).

H257 serves as a coordination point for Zn(2+). Residue E258 is part of the active site. Zn(2+)-binding residues include H261 and H364.

It belongs to the peptidase M8 family. Zn(2+) serves as cofactor.

It localises to the cytoplasm. Essential for the coordination of mitotic progression, and also plays a role in cell migration. This Drosophila melanogaster (Fruit fly) protein is Leishmanolysin-like peptidase (Invadolysin).